We begin with the raw amino-acid sequence, 346 residues long: Tetraacyldisaccharide 4'-kinase (346 aa).

54-61 contributes to the ATP binding site; the sequence is TVGGAGKT.

The protein belongs to the LpxK family.

It carries out the reaction a lipid A disaccharide + ATP = a lipid IVA + ADP + H(+). The protein operates within glycolipid biosynthesis; lipid IV(A) biosynthesis; lipid IV(A) from (3R)-3-hydroxytetradecanoyl-[acyl-carrier-protein] and UDP-N-acetyl-alpha-D-glucosamine: step 6/6. Functionally, transfers the gamma-phosphate of ATP to the 4'-position of a tetraacyldisaccharide 1-phosphate intermediate (termed DS-1-P) to form tetraacyldisaccharide 1,4'-bis-phosphate (lipid IVA). In Rhizobium etli (strain ATCC 51251 / DSM 11541 / JCM 21823 / NBRC 15573 / CFN 42), this protein is Tetraacyldisaccharide 4'-kinase.